A 440-amino-acid chain; its full sequence is Tuliposide B-converting enzyme 1, amyloplastic (440 aa).

An amyloplast-targeting transit peptide spans 1-58 (MSIVSFCSSLPAGPHGFKHGRGTRDMVHMPCIVRRTARSPAQACRLLRWNKYHCAAVP). Residue Ser232 is the Acyl-ester intermediate of the active site. Active-site charge relay system residues include Asp325 and His357.

It belongs to the AB hydrolase superfamily. As to quaternary structure, homodimer. Post-translationally, not glycosylated. In terms of tissue distribution, expressed in the pollen grains.

It localises to the plastid. The protein localises to the amyloplast. It catalyses the reaction 6-tuliposide B = tulipalin B + D-glucose. With respect to regulation, inhibited by Ag(+), Cu(2+), Fe(2+), Hg(2+), V(3+) and phenylmethylsulfonyl fluoride (PMSF). Lactone-forming carboxylesterase, specifically catalyzing intramolecular transesterification, but not hydrolysis. Involved in the biosynthesis of tulipalins, defensive chemicals that show antimicrobial activities against a broad range of strains of bacteria and fungi. Substrates are 6-tuliposide B &gt; 6-tuliposide A. The sequence is that of Tuliposide B-converting enzyme 1, amyloplastic from Tulipa gesneriana (Garden tulip).